The chain runs to 97 residues: MKIEVNENLIKHLENLSLIQLSGEEEKILEKDLANIIKFFEKINELDLSNVEPLFHPLPQGRLRKDVPRDPLDRENALKNVKRKEDGYIVGPRTYGE.

It belongs to the GatC family. In terms of assembly, heterotrimer of A, B and C subunits.

The catalysed reaction is L-glutamyl-tRNA(Gln) + L-glutamine + ATP + H2O = L-glutaminyl-tRNA(Gln) + L-glutamate + ADP + phosphate + H(+). It carries out the reaction L-aspartyl-tRNA(Asn) + L-glutamine + ATP + H2O = L-asparaginyl-tRNA(Asn) + L-glutamate + ADP + phosphate + 2 H(+). Functionally, allows the formation of correctly charged Asn-tRNA(Asn) or Gln-tRNA(Gln) through the transamidation of misacylated Asp-tRNA(Asn) or Glu-tRNA(Gln) in organisms which lack either or both of asparaginyl-tRNA or glutaminyl-tRNA synthetases. The reaction takes place in the presence of glutamine and ATP through an activated phospho-Asp-tRNA(Asn) or phospho-Glu-tRNA(Gln). This Saccharolobus solfataricus (strain ATCC 35092 / DSM 1617 / JCM 11322 / P2) (Sulfolobus solfataricus) protein is Glutamyl-tRNA(Gln) amidotransferase subunit C.